The sequence spans 1170 residues: MMNKSNFEFLKGVNDFTYAIACAAENNYPDDPNTTLIKMRMFGEATAKHLGLLLNIPPCENQHDLLRELGKIAFVDDNILSVFHKLRRIGNQAVHEYHNDLNDAQMCLRLGFRLAVWYYRLVTKDYDFPVPVFVLPERGENLYHQEVLTLKQQLEQQVREKAQTQAEVEAQQQKLVALNGYIAILEGKQQETEAQTQARLAALEAQLAEKNAELAKQTEQERKAYHKEITDQAIKRTLNLSEEESRFLIDAQLRKAGWQADSKTLRFSKGARPEPGVNKAIAEWPTGKDETGNQGFADYVLFVGLKPIAVVEAKRNNIDVPARLNESYRYSKCFDNGFLRETLLEHYSPDEVHEAVPEYETSWQDTSGKQRFKIPFCYSTNGREYRATMKTKSGIWYRDVRDTRNMSKALPEWHRPEELLEMLGSEPQKQNQWFADNPGMSELGLRYYQEDAVRAVEKAIVKGQQEILLAMATGTGKTRTAIAMMFRLIQSQRFKRILFLVDRRSLGEQALGAFEDTRINGDTFNSIFDIKGLTDKFPEDSTKIHVATVQSLVKRTLQSDEPMPVARYDCIVVDEAHRGYILDKEQTEGELQFRSQLDYVSAYRRILDHFDAVKIALTATPALHTVQIFGEPVYRYTYRTAVIDGFLIDQDPPIQIITRNAQEGVYLSKGEQVERISPQGEVINDTLEDDQDFEVADFNRGLVIPAFNRAVCNELTNYLDPTGSQKTLVFCVTNAHADMVVEELRAAFKKKYPQLEHDAIIKITGDADKDARKVQTMITRFNKERLPNIVVTVDLLTTGVDIPSICNIVFLRKVRSRILYEQMKGRATRLCPEVNKTSFKIFDCVDIYSTLESVDTMRPVVVRPKVELQTLVNEITDSETYKITEADGRSFAEHSHEQLVAKLQRIIGLATFNRDRSETIDKQVRRLDELCQDAAGVNFNGFASRLREKGPHWSAEVFNKLPGFIARLEKLKTDINNLNDAPIFLDIDDEVVSVKSLYGDYDTPQDFLEAFDSLVQRSPNAQPALQAVINRPRDLTRKGLVELQEWFDRQHFEESSLRKAWKETRNEDIAARLIGHIRRAAVGDALKPFEERVDHALTRIKGENDWSSEQLSWLDRLAQALKEKVVLDDDVFKTGNFHRRGGKAMLQRTFDDNLDTLLGKFSDYIWDELA.

A coiled-coil region spans residues Tyr-143–Ile-229. The H-T-H motif DNA-binding region spans Asn-431 to Glu-450. The Helicase ATP-binding domain occupies Lys-458–Arg-639. Ala-472–Thr-478 is an ATP binding site. A DEAH box motif is present at residues Asp-574–His-577. Residues Glu-714–Glu-879 form the Helicase C-terminal domain.

Belongs to the HsdR family. The type I restriction/modification system is composed of three polypeptides R, M and S. The restriction enzyme has stoichiometry R(2)M(2)S(1). The methyltransferase is composed of M(2)S(1). In terms of assembly, (Microbial infection) Interacts with Escherichia phage T7 protein Ocr; this interaction leads to the inhibition of the type I bifunctional endonuclease and methyltransferase restriction enzyme R.EcoKI composed of R(2)M(2)S(1). Upon purification after overexpression about one-third has the initiating methionine removed.

It carries out the reaction Endonucleolytic cleavage of DNA to give random double-stranded fragments with terminal 5'-phosphates, ATP is simultaneously hydrolyzed.. Its function is as follows. The subtype A restriction (R) subunit of a type I restriction enzyme that recognizes 5'-AACN(6)GTGC-3' and cleaves a random distance away. The R subunit is required for both endonuclease and ATPase activities but not for modification. Has endonucleolytic activity that requires Mg(2+), ATP and S-adenosyl-L-methionine (SAM); ATP can be replaced by dATP, no tested molecule could substitute for SAM. Generates double-stranded DNA with no nicks, by cutting one strand then the other within a few seconds. Cleaves only non-methylated DNA, hemi-methylated and fully methylated DNA are not substrates. After locating a non-methylated recognition site, the enzyme complex serves as a molecular motor that translocates DNA in an ATP-dependent manner until a collision occurs that triggers cleavage. The polypeptide is Type I restriction enzyme EcoKI endonuclease subunit (Escherichia coli (strain K12)).